The chain runs to 375 residues: 4,4'-diaponeurosporenoate glycosyltransferase (375 aa).

4 helical membrane-spanning segments follow: residues 3–23 (WLSRILTVIVTMSMACGALIF), 164–184 (FYEGFSAIFNLMTVVGMNVFS), 277–297 (IMTAIVLWLFGSIASILGLCL), and 330–350 (FSNLLMVCHPLLFMFFTKIFI).

Belongs to the glycosyltransferase 2 family. CrtQ subfamily.

The protein resides in the cell membrane. The protein operates within carotenoid biosynthesis; staphyloxanthin biosynthesis; staphyloxanthin from farnesyl diphosphate: step 4/5. Catalyzes the glycosylation of 4,4'-diaponeurosporenoate, i.e. the esterification of glucose at the C1'' position with the carboxyl group of 4,4'-diaponeurosporenic acid, to form glycosyl-4,4'-diaponeurosporenoate. This is a step in the biosynthesis of staphyloxanthin, an orange pigment present in most staphylococci strains. This chain is 4,4'-diaponeurosporenoate glycosyltransferase (crtQ), found in Staphylococcus aureus (strain Mu50 / ATCC 700699).